A 189-amino-acid chain; its full sequence is Ornithine decarboxylase antizyme 2 (189 aa).

Serine 186 carries the phosphoserine modification.

Belongs to the ODC antizyme family. In terms of assembly, interacts with ODC1 and thereby sterically blocks ODC homodimerization. Interacts with AZIN2; this interaction disrupts the interaction between the antizyme and ODC1.

It localises to the nucleus. Ornithine decarboxylase (ODC) antizyme protein that negatively regulates ODC activity and intracellular polyamine biosynthesis and uptake in response to increased intracellular polyamine levels. Binds to ODC monomers, inhibiting the assembly of the functional ODC homodimers. Does not target the ODC monomers for degradation, which allows a protein synthesis-independent restoration of ODC activity. Involved in the translocation of AZIN2 from ER-Golgi intermediate compartment (ERGIC) to the cytosol. This chain is Ornithine decarboxylase antizyme 2 (Oaz2), found in Mus musculus (Mouse).